Here is a 297-residue protein sequence, read N- to C-terminus: Phosphoribosylaminoimidazole-succinocarboxamide synthase (297 aa).

The protein belongs to the SAICAR synthetase family.

It carries out the reaction 5-amino-1-(5-phospho-D-ribosyl)imidazole-4-carboxylate + L-aspartate + ATP = (2S)-2-[5-amino-1-(5-phospho-beta-D-ribosyl)imidazole-4-carboxamido]succinate + ADP + phosphate + 2 H(+). It functions in the pathway purine metabolism; IMP biosynthesis via de novo pathway; 5-amino-1-(5-phospho-D-ribosyl)imidazole-4-carboxamide from 5-amino-1-(5-phospho-D-ribosyl)imidazole-4-carboxylate: step 1/2. This Rhodococcus erythropolis (strain PR4 / NBRC 100887) protein is Phosphoribosylaminoimidazole-succinocarboxamide synthase.